We begin with the raw amino-acid sequence, 490 residues long: Betaine aldehyde dehydrogenase (490 aa).

D93 lines the K(+) pocket. 150-152 (GAW) provides a ligand contact to NAD(+). The active-site Charge relay system is the K162. 176–179 (KPSE) contacts NAD(+). V180 contacts K(+). 230–233 (GIAS) lines the NAD(+) pocket. L246 provides a ligand contact to K(+). E252 (proton acceptor) is an active-site residue. NAD(+)-binding residues include G254, C286, and E387. The Nucleophile role is filled by C286. C286 carries the post-translational modification Cysteine sulfenic acid (-SOH). Residues K457 and G460 each coordinate K(+). The Charge relay system role is filled by E464.

This sequence belongs to the aldehyde dehydrogenase family. In terms of assembly, dimer of dimers. K(+) is required as a cofactor.

The enzyme catalyses betaine aldehyde + NAD(+) + H2O = glycine betaine + NADH + 2 H(+). It participates in amine and polyamine biosynthesis; betaine biosynthesis via choline pathway; betaine from betaine aldehyde: step 1/1. Its function is as follows. Involved in the biosynthesis of the osmoprotectant glycine betaine. Catalyzes the irreversible oxidation of betaine aldehyde to the corresponding acid. This Pectobacterium carotovorum subsp. carotovorum (strain PC1) protein is Betaine aldehyde dehydrogenase.